Consider the following 312-residue polypeptide: Ribosomal RNA small subunit methyltransferase H (312 aa).

Residues 34–36, aspartate 54, leucine 83, aspartate 99, and glutamine 106 contribute to the S-adenosyl-L-methionine site; that span reads GGH.

It belongs to the methyltransferase superfamily. RsmH family.

Its subcellular location is the cytoplasm. The catalysed reaction is cytidine(1402) in 16S rRNA + S-adenosyl-L-methionine = N(4)-methylcytidine(1402) in 16S rRNA + S-adenosyl-L-homocysteine + H(+). Its function is as follows. Specifically methylates the N4 position of cytidine in position 1402 (C1402) of 16S rRNA. This chain is Ribosomal RNA small subunit methyltransferase H, found in Rubrobacter xylanophilus (strain DSM 9941 / JCM 11954 / NBRC 16129 / PRD-1).